A 401-amino-acid chain; its full sequence is Thermophilic serine proteinase (401 aa).

The first 24 residues, 1–24, serve as a signal peptide directing secretion; it reads MKFKAIVSLSLAVSMSLFPFLVEA. A propeptide spanning residues 25–121 is cleaved from the precursor; it reads ASNDGVESPK…AEPNYLFNAA (97 aa). Asp-126 lines the Ca(2+) pocket. A Peptidase S8 domain is found at 133–399; that stretch reads QYGPQNTYTD…YGRINSYNAV (267 aa). The active-site Charge relay system is the Asp-160. Pro-168, Asp-169, Asp-171, Asp-179, Asp-184, and Asp-186 together coordinate Ca(2+). His-193 serves as the catalytic Charge relay system. The Ca(2+) site is built by Glu-204, Asn-207, Thr-209, and Ile-211. Cys-258 and Cys-260 are disulfide-bonded. Positions 297, 300, and 323 each coordinate Na(+). Ser-347 functions as the Charge relay system in the catalytic mechanism.

It belongs to the peptidase S8 family. Ca(2+) serves as cofactor. Requires Na(+) as cofactor.

It is found in the secreted. The chain is Thermophilic serine proteinase from Bacillus sp. (strain AK1).